We begin with the raw amino-acid sequence, 3289 residues long: tRNA nuclease CdiA (3289 aa).

Residues 1-32 (MHQPPVRFTYRLLSYLISTIIAGQPLLPAVGA) form the signal peptide. Positions 36–322 (PQNGAGMDKA…AGGNLSVSSR (287 aa)) are two-partner system transport domain (TPS). The segment at 351 to 1398 (EKLTAGRDVT…IVVRTGHLLN (1048 aa)) is FHA-1. The disordered stretch occupies residues 595–615 (AVNASEKLTHSGKSSAPSLSL). Positions 1399–1689 (QREGFSATTT…LTGQTGISDD (291 aa)) are receptor binding domain (RBD). The segment at 1690–1874 (WPLPSGNNGY…LSPEDITLHN (185 aa)) is YP domain. Positions 1875-1935 (GSVISGNNVQ…DLSAIGDISN (61 aa)) are periplasmic FHA-1 repeat (pFR). Residues 1979 to 2653 (TDTGPVATIK…TSKYDSKQTS (675 aa)) are FHA-2. The span at 2097–2113 (RESKNSRNGRSESHESH) shows a compositional bias: basic and acidic residues. 3 disordered regions span residues 2097 to 2116 (RESKNSRNGRSESHESHAAV), 2332 to 2356 (GSSKTTHDRREAGTTQSQSASTIGS), and 2466 to 2513 (TGDP…TGKN). Composition is skewed to polar residues over residues 2344 to 2356 (GTTQSQSASTIGS) and 2472 to 2507 (TGVSLSLTTQKSKSQQHSESDTVSGSTLNAGNNLSV). The tract at residues 2992 to 3034 (SDLSEEQKQTISTLATVSAGLAGGLTGNSTASAAVGAQSGKNA) is pretoxin (PT) domain. Positions 3035 to 3038 (VENN) match the VENN CT cleavage motif motif. The segment at 3035-3289 (VENNYLSVSE…VGHIQPVKVK (255 aa)) is C-terminal effector domain (CT); has tRNase activity. The tract at residues 3039-3197 (YLSVSEKTEL…PLIGQAASNK (159 aa)) is inner membrane translocation domain (IMTD), targets protein to PtsG.

This sequence in the N-terminal section; belongs to the CdiA toxin family. Forms a contact-dependent growth inhibition complex of CdiA-CT-NC101, CdiI-NC101 and EF-Tu; the complex is a dimer of heterotrimers. Stable CdiA-CT-NC101, EF-Tu complexes are not detected, nor are complexes with EF-Ts.

The protein localises to the secreted. It localises to the target cell. It is found in the target cell cytoplasm. Functionally, toxic component of a toxin-immunity protein module, which functions as a cellular contact-dependent growth inhibition (CDI) system. CDI modules allow bacteria to communicate with and inhibit the growth of closely related neighboring bacteria in a contact-dependent fashion (target cell counts decrease about 10,0000-fold for this system). CdiA toxicity is neutralized by its cognate immunity protein CdiI-NC101, but not by CdiI from other bacteria. The C-terminal domain (CT) cleaves tRNA endonucleolytically at the 5' side of guanine discriminator nucleotide sites (removes the last 4 nucleotides of the tRNA acceptor arm when the first nucleotide to be removed is G). Requires EF-Ts (tsf) for toxic function of the CT domain in vivo. In vitro the CT tRNase activity requires both EF-Tu (tufA) and EF-Ts. EF-Ts probably increases steady-state GTP-EF-Tu-aa-tRNA substrate levels. The CT domain is thought to remodel this same complex to displace the 3'-end of the aa-tRNA and allow it to enter into the toxin active site. The CT domain gains access to the cytoplasm of target cells by using integral inner membrane protein PTS system glucose-specific EIICB component (ptsG). Its function is as follows. The CdiA protein is thought to be exported from the cell through the central lumen of CdiB, the other half of its two-partner system (TPS). The TPS domain probably remains associated with CdiB while the FHA-1 domain forms an extended filament with the receptor-binding domain (RBD) at its extremity; in the secretion arrested state the C-terminus of the RBD and YP domains form a hairpin-like structure as the FHA-2, PT and CT domains are periplasmic. The YP domain is probably responsible for this arrest at the point where it re-enters the host cell periplasm. Upon binding to a target cell outer membrane receptor a signal is transmitted to activate secretion. The filament elongates slightly, the rest of CdiA is secreted and the FHA-2 domain becomes stably associated with the target cell's outer membrane where it facilitates entry of the toxic CT domain into the target cell periplasm. From there the toxic CT domain is cleaved and gains access to the target cell cytoplasm via an inner membrane protein (PtsG for this CDI). In Escherichia coli (strain NC101), this protein is tRNA nuclease CdiA.